The primary structure comprises 215 residues: Sodium channel regulatory subunit beta-2 (215 aa).

The first 29 residues, 1–29 (MHRDAWLPRPAFSLTGLSLFFSLVPPGRS), serve as a signal peptide directing secretion. Residues 30–157 (MEVTVPATLN…XEEPPERDST (128 aa)) lie on the Extracellular side of the membrane. Residues 32–154 (VTVPATLNVL…QVLXEEPPER (123 aa)) enclose the Ig-like C2-type domain. N-linked (GlcNAc...) asparagine glycans are attached at residues N42, N66, and N74. Cystine bridges form between C50–C127 and C72–C75. The chain crosses the membrane as a helical span at residues 158–179 (VAVIVGASVGGFLAVVILVLMV). Residues 180-215 (VKCVRRKKEQKLSTDDLKTEEEGKTDGEGNPDDGAK) lie on the Cytoplasmic side of the membrane. Residues 187–215 (KEQKLSTDDLKTEEEGKTDGEGNPDDGAK) are disordered. Basic and acidic residues predominate over residues 189-215 (QKLSTDDLKTEEEGKTDGEGNPDDGAK). Position 192 is a phosphoserine (S192). T204 is modified (phosphothreonine).

It belongs to the sodium channel auxiliary subunit SCN2B (TC 8.A.17) family. As to quaternary structure, a voltage-gated sodium (Nav) channel consists of an ion-conducting pore-forming alpha subunit functional on its own that is regulated by one or more beta subunits. The beta subunit SCN2B is disulfide-linked to the pore-forming alpha subunit. Interacts with SCN1A; regulatory subunit of SCN1A/Nav1.1. Interacts with SCN2A; regulatory subunit of SCN2A/Nav1.2. Interacts with SCN3A; regulatory subunit of SCN3A/Nav1.3. Interacts with SCN5A; regulatory subunit of SCN5A/Nav1.5. Interacts with SCN8A; regulatory subunit of SCN8A/Nav1.6. Interacts with SCN9A; regulatory subunit of SCN9A/Nav1.7. Interacts with SCN10A; regulatory subunit of SCN10A/Nav1.8. Interacts with TNR; may play a crucial role in clustering and regulation of activity of SCN2B-containing Nav channels at nodes of Ranvier.

It localises to the cell membrane. The protein localises to the cell projection. It is found in the axon. Regulatory subunit of multiple voltage-gated sodium (Nav) channels, that directly mediate the depolarization of excitable membranes. Navs, also called VGSCs (voltage-gated sodium channels) or VDSCs (voltage-dependent sodium channels), operate by switching between closed and open conformations depending on the voltage difference across the membrane. In the open conformation they allow Na(+) ions to selectively pass through the pore, along their electrochemical gradient. The influx of Na+ ions provokes membrane depolarization, initiating the propagation of electrical signals throughout cells and tissues. The accessory beta subunits participate in localization and functional modulation of the Nav channels. Modulates the activity of SCN1A/Nav1.1, SCN2A/Nav1.2, SCN2A/Nav1.3, SCN5A/Nav1.5, SCN8A/Nav1.6, SCN9A/Nav1.7 and SCN10A/Nav1.8. The chain is Sodium channel regulatory subunit beta-2 from Canis lupus familiaris (Dog).